The primary structure comprises 556 residues: Phenylalanine--tRNA ligase beta subunit (556 aa).

The B5 domain occupies 269-345; that stretch reads MEPEEVVYDV…MGYGYERIEP (77 aa). Mg(2+) is bound by residues Asp323, Asp329, Glu332, and Glu333.

The protein belongs to the phenylalanyl-tRNA synthetase beta subunit family. Type 2 subfamily. As to quaternary structure, tetramer of two alpha and two beta subunits. Requires Mg(2+) as cofactor.

Its subcellular location is the cytoplasm. It carries out the reaction tRNA(Phe) + L-phenylalanine + ATP = L-phenylalanyl-tRNA(Phe) + AMP + diphosphate + H(+). The polypeptide is Phenylalanine--tRNA ligase beta subunit (Thermofilum pendens (strain DSM 2475 / Hrk 5)).